The chain runs to 311 residues: L-lactate dehydrogenase (311 aa).

NAD(+) is bound by residues valine 12, aspartate 33, lysine 38, tyrosine 63, and 77–78 (GA). Residues glutamine 80, arginine 86, and 118–121 (NPVD) each bind substrate. Residues 116-118 (VTN) and serine 141 contribute to the NAD(+) site. 146-149 (DSAR) provides a ligand contact to substrate. Beta-D-fructose 1,6-bisphosphate is bound by residues arginine 151 and histidine 166. Residue histidine 173 is the Proton acceptor of the active site. Tyrosine 219 carries the phosphotyrosine modification. Residue threonine 228 participates in substrate binding.

Belongs to the LDH/MDH superfamily. LDH family. Homotetramer.

The protein localises to the cytoplasm. The catalysed reaction is (S)-lactate + NAD(+) = pyruvate + NADH + H(+). It participates in fermentation; pyruvate fermentation to lactate; (S)-lactate from pyruvate: step 1/1. Its activity is regulated as follows. Allosterically activated by fructose 1,6-bisphosphate (FBP). Catalyzes the conversion of lactate to pyruvate. The protein is L-lactate dehydrogenase of Thermoanaerobacter pseudethanolicus (strain ATCC 33223 / 39E) (Clostridium thermohydrosulfuricum).